The primary structure comprises 489 residues: Long chain base biosynthesis protein 2b (489 aa).

Residues 2-22 (ITIPYLTAVSTYFSYGLLFAF) traverse the membrane as a helical segment. An N6-(pyridoxal phosphate)lysine modification is found at Lys311.

Belongs to the class-II pyridoxal-phosphate-dependent aminotransferase family. As to quaternary structure, heterodimer with LCB1. Component of the serine palmitoyltransferase (SPT) complex, composed of LCB1 and LCB2 (LCB2a or LCB2b). Pyridoxal 5'-phosphate serves as cofactor. Ubiquitous with the highest expression in flowers.

The protein localises to the endoplasmic reticulum membrane. It catalyses the reaction L-serine + hexadecanoyl-CoA + H(+) = 3-oxosphinganine + CO2 + CoA. Its pathway is lipid metabolism; sphingolipid metabolism. Serine palmitoyltransferase (SPT). The heterodimer formed with LCB1 constitutes the catalytic core. Plays an important role during male gametogenesis and embryogenesis. In Arabidopsis thaliana (Mouse-ear cress), this protein is Long chain base biosynthesis protein 2b (LCB2b).